A 165-amino-acid polypeptide reads, in one-letter code: Protein C2-DOMAIN ABA-RELATED 7 (165 aa).

Methionine 1 carries the post-translational modification N-acetylmethionine. In terms of domain architecture, C2 spans 1–106 (MEELVGLLRI…HKMGLQELPD (106 aa)). Arginine 21, aspartate 22, aspartate 27, aspartate 73, lysine 74, aspartate 75, and aspartate 81 together coordinate Ca(2+).

The protein belongs to the plant CAR protein family. Binds to PYR/PYL/RCAR abscisic acid intracellular receptors in an ABA-independent manner, both at the plasma membrane and in the nucleus.

Its subcellular location is the cell membrane. It is found in the nucleus. Functionally, stimulates the GTPase/ATPase activities of Obg-like ATPases. Mediates the transient calcium-dependent interaction of PYR/PYL/RCAR abscisic acid (ABA) receptors with the plasma membrane and thus regulates ABA sensitivity. The protein is Protein C2-DOMAIN ABA-RELATED 7 of Arabidopsis thaliana (Mouse-ear cress).